The chain runs to 168 residues: Small ribosomal subunit protein bS16 (168 aa).

The segment at 110-168 (LSEANNGPTAEAITEKKKKAREEKEAKEAAEKAAAEKAAAAEAEASEEAPAEEAASEEA) is disordered. Residues 129–144 (AREEKEAKEAAEKAAA) show a composition bias toward basic and acidic residues. Over residues 153-168 (EASEEAPAEEAASEEA) the composition is skewed to acidic residues.

This sequence belongs to the bacterial ribosomal protein bS16 family.

In Corynebacterium efficiens (strain DSM 44549 / YS-314 / AJ 12310 / JCM 11189 / NBRC 100395), this protein is Small ribosomal subunit protein bS16.